The chain runs to 119 residues: Large ribosomal subunit protein uL24 (119 aa).

It belongs to the universal ribosomal protein uL24 family. In terms of assembly, part of the 50S ribosomal subunit.

In terms of biological role, one of two assembly initiator proteins, it binds directly to the 5'-end of the 23S rRNA, where it nucleates assembly of the 50S subunit. Functionally, one of the proteins that surrounds the polypeptide exit tunnel on the outside of the subunit. This is Large ribosomal subunit protein uL24 from Leptospira interrogans serogroup Icterohaemorrhagiae serovar copenhageni (strain Fiocruz L1-130).